Here is a 422-residue protein sequence, read N- to C-terminus: tRNA hydroxylation protein P (422 aa).

An N-terminal signal peptide occupies residues 1–58; sequence MNQVELLSPAGNLKKLKIALNYGADAVYGGVSHFSLRNRAGKEFTLETFKEGIDYAHA.

The protein belongs to the peptidase U32 family.

Its function is as follows. Involved in prephenate-dependent formation of 5-hydroxyuridine (ho5U) modification at position 34 in tRNAs, the first step in 5-carboxymethoxyuridine (cmo5U) biosynthesis. The protein is tRNA hydroxylation protein P of Helicobacter pylori (strain ATCC 700392 / 26695) (Campylobacter pylori).